The chain runs to 554 residues: Phenylalanine--tRNA ligase beta subunit (554 aa).

The 76-residue stretch at leucine 276 to glycine 351 folds into the B5 domain. Positions 329, 335, 338, and 339 each coordinate Mg(2+).

The protein belongs to the phenylalanyl-tRNA synthetase beta subunit family. Type 2 subfamily. In terms of assembly, tetramer of two alpha and two beta subunits. Requires Mg(2+) as cofactor.

The protein localises to the cytoplasm. The enzyme catalyses tRNA(Phe) + L-phenylalanine + ATP = L-phenylalanyl-tRNA(Phe) + AMP + diphosphate + H(+). The chain is Phenylalanine--tRNA ligase beta subunit from Methanococcus maripaludis (strain C6 / ATCC BAA-1332).